A 511-amino-acid chain; its full sequence is Bifunctional purine biosynthesis protein PurH (511 aa).

The region spanning 1-145 (MKKRALVSVS…KNHQFVSVIV (145 aa)) is the MGS-like domain.

It belongs to the PurH family.

The enzyme catalyses (6R)-10-formyltetrahydrofolate + 5-amino-1-(5-phospho-beta-D-ribosyl)imidazole-4-carboxamide = 5-formamido-1-(5-phospho-D-ribosyl)imidazole-4-carboxamide + (6S)-5,6,7,8-tetrahydrofolate. The catalysed reaction is IMP + H2O = 5-formamido-1-(5-phospho-D-ribosyl)imidazole-4-carboxamide. It participates in purine metabolism; IMP biosynthesis via de novo pathway; 5-formamido-1-(5-phospho-D-ribosyl)imidazole-4-carboxamide from 5-amino-1-(5-phospho-D-ribosyl)imidazole-4-carboxamide (10-formyl THF route): step 1/1. It functions in the pathway purine metabolism; IMP biosynthesis via de novo pathway; IMP from 5-formamido-1-(5-phospho-D-ribosyl)imidazole-4-carboxamide: step 1/1. This Bacillus cereus (strain G9842) protein is Bifunctional purine biosynthesis protein PurH.